Reading from the N-terminus, the 709-residue chain is Polyribonucleotide nucleotidyltransferase (709 aa).

Positions 487 and 493 each coordinate Mg(2+). The 60-residue stretch at 554–613 folds into the KH domain; sequence PRIHTMKISSDKIKDVIGKGGAVIRALCEETGTTIEIEDDGTIKIAATEGAAAKEAIRRI. The S1 motif domain occupies 623 to 691; sequence GKIYPGKVMR…RQGRIRLSIK (69 aa).

The protein belongs to the polyribonucleotide nucleotidyltransferase family. In terms of assembly, component of the RNA degradosome, which is a multiprotein complex involved in RNA processing and mRNA degradation. Mg(2+) is required as a cofactor.

Its subcellular location is the cytoplasm. It carries out the reaction RNA(n+1) + phosphate = RNA(n) + a ribonucleoside 5'-diphosphate. In terms of biological role, involved in mRNA degradation. Catalyzes the phosphorolysis of single-stranded polyribonucleotides processively in the 3'- to 5'-direction. The polypeptide is Polyribonucleotide nucleotidyltransferase (Aliivibrio salmonicida (strain LFI1238) (Vibrio salmonicida (strain LFI1238))).